We begin with the raw amino-acid sequence, 373 residues long: 3 beta-hydroxysteroid dehydrogenase/Delta 5--&gt;4-isomerase type 1 (373 aa).

NADP(+) contacts are provided by residues 10-15 (GAGGFL), tyrosine 155, and lysine 159. Lysine 159 acts as the Proton donor in catalysis. The helical transmembrane segment at 288 to 308 (LSLMYWIGFLLEIVSFLLRPI) threads the bilayer.

It belongs to the 3-beta-HSD family. As to expression, placenta and skin. Predominantly expressed in mammary gland tissue.

It localises to the endoplasmic reticulum membrane. Its subcellular location is the mitochondrion membrane. It carries out the reaction a 3beta-hydroxy-Delta(5)-steroid + NAD(+) = a 3-oxo-Delta(5)-steroid + NADH + H(+). The catalysed reaction is pregnenolone + NAD(+) = pregn-5-ene-3,20-dione + NADH + H(+). It catalyses the reaction 3beta-hydroxyandrost-5-en-17-one + NAD(+) = androst-5-ene-3,17-dione + NADH + H(+). The enzyme catalyses androst-5-en-3beta,17beta-diol + NAD(+) = 17beta-hydroxy-androst-5-en-3-one + NADH + H(+). It carries out the reaction a 3beta-hydroxysteroid + NADP(+) = a 3-oxosteroid + NADPH + H(+). The catalysed reaction is 5alpha-androstane-3beta,17beta-diol + NADP(+) = 17beta-hydroxy-5alpha-androstan-3-one + NADPH + H(+). It catalyses the reaction 3beta-hydroxy-5alpha-androstan-17-one + NADP(+) = 5alpha-androstan-3,17-dione + NADPH + H(+). The enzyme catalyses a 3-oxo-Delta(5)-steroid = a 3-oxo-Delta(4)-steroid. It carries out the reaction pregn-5-ene-3,20-dione = progesterone. The catalysed reaction is androst-5-ene-3,17-dione = androst-4-ene-3,17-dione. It catalyses the reaction 17beta-hydroxy-androst-5-en-3-one = testosterone. The enzyme catalyses 5alpha-androstane-3beta,17beta-diol + NAD(+) = 17beta-hydroxy-5alpha-androstan-3-one + NADH + H(+). It participates in steroid hormone biosynthesis. Its pathway is steroid metabolism. A bifunctional enzyme responsible for the oxidation and isomerization of 3beta-hydroxy-Delta(5)-steroid precursors to 3-oxo-Delta(4)-steroids, an essential step in steroid hormone biosynthesis. Specifically catalyzes the conversion of pregnenolone to progesterone, 17alpha-hydroxypregnenolone to 17alpha-hydroxyprogesterone, dehydroepiandrosterone (DHEA) to 4-androstenedione, and androstenediol to testosterone. Additionally, catalyzes the interconversion between 3beta-hydroxy and 3-oxo-5alpha-androstane steroids controlling the bioavalability of the active forms. Specifically converts dihydrotestosterone to its inactive form 5alpha-androstanediol, that does not bind androgen receptor/AR. Also converts androstanedione, a precursor of testosterone and estrone, to epiandrosterone. Expected to use NAD(+) as preferred electron donor for the 3beta-hydroxy-steroid dehydrogenase activity and NADPH for the 3-ketosteroid reductase activity. This is 3 beta-hydroxysteroid dehydrogenase/Delta 5--&gt;4-isomerase type 1 from Homo sapiens (Human).